A 350-amino-acid polypeptide reads, in one-letter code: UDP-3-O-acylglucosamine N-acyltransferase (350 aa).

The active-site Proton acceptor is His-244.

It belongs to the transferase hexapeptide repeat family. LpxD subfamily. In terms of assembly, homotrimer.

It carries out the reaction a UDP-3-O-[(3R)-3-hydroxyacyl]-alpha-D-glucosamine + a (3R)-hydroxyacyl-[ACP] = a UDP-2-N,3-O-bis[(3R)-3-hydroxyacyl]-alpha-D-glucosamine + holo-[ACP] + H(+). The protein operates within bacterial outer membrane biogenesis; LPS lipid A biosynthesis. Catalyzes the N-acylation of UDP-3-O-acylglucosamine using 3-hydroxyacyl-ACP as the acyl donor. Is involved in the biosynthesis of lipid A, a phosphorylated glycolipid that anchors the lipopolysaccharide to the outer membrane of the cell. The polypeptide is UDP-3-O-acylglucosamine N-acyltransferase (Herminiimonas arsenicoxydans).